A 268-amino-acid chain; its full sequence is Ribosomal RNA small subunit methyltransferase A (268 aa).

Asn21, Leu23, Gly48, Glu69, Asp94, and Asn115 together coordinate S-adenosyl-L-methionine.

This sequence belongs to the class I-like SAM-binding methyltransferase superfamily. rRNA adenine N(6)-methyltransferase family. RsmA subfamily.

Its subcellular location is the cytoplasm. The catalysed reaction is adenosine(1518)/adenosine(1519) in 16S rRNA + 4 S-adenosyl-L-methionine = N(6)-dimethyladenosine(1518)/N(6)-dimethyladenosine(1519) in 16S rRNA + 4 S-adenosyl-L-homocysteine + 4 H(+). In terms of biological role, specifically dimethylates two adjacent adenosines (A1518 and A1519) in the loop of a conserved hairpin near the 3'-end of 16S rRNA in the 30S particle. May play a critical role in biogenesis of 30S subunits. The chain is Ribosomal RNA small subunit methyltransferase A from Saccharophagus degradans (strain 2-40 / ATCC 43961 / DSM 17024).